A 251-amino-acid chain; its full sequence is Triosephosphate isomerase (251 aa).

9-11 provides a ligand contact to substrate; that stretch reads NWK. Histidine 95 (electrophile) is an active-site residue. The active-site Proton acceptor is the glutamate 167. Substrate is bound by residues glycine 173, serine 213, and 234–235; that span reads GG.

The protein belongs to the triosephosphate isomerase family. In terms of assembly, homodimer.

It localises to the cytoplasm. It carries out the reaction D-glyceraldehyde 3-phosphate = dihydroxyacetone phosphate. It participates in carbohydrate biosynthesis; gluconeogenesis. It functions in the pathway carbohydrate degradation; glycolysis; D-glyceraldehyde 3-phosphate from glycerone phosphate: step 1/1. Involved in the gluconeogenesis. Catalyzes stereospecifically the conversion of dihydroxyacetone phosphate (DHAP) to D-glyceraldehyde-3-phosphate (G3P). The protein is Triosephosphate isomerase of Geotalea uraniireducens (strain Rf4) (Geobacter uraniireducens).